Here is a 102-residue protein sequence, read N- to C-terminus: 10 kDa heat shock protein, mitochondrial (102 aa).

Alanine 2 bears the N-acetylalanine mark. N6-acetyllysine is present on lysine 8. Lysine 28 is subject to N6-succinyllysine. Lysine 40 bears the N6-acetyllysine; alternate mark. An N6-malonyllysine; alternate mark is found at lysine 40, lysine 54, and lysine 56. N6-succinyllysine; alternate is present on residues lysine 40, lysine 54, lysine 56, lysine 66, and lysine 70. 3 positions are modified to N6-acetyllysine; alternate: lysine 56, lysine 66, and lysine 70. Threonine 79 bears the Phosphothreonine mark. An N6-acetyllysine; alternate mark is found at lysine 80 and lysine 86. 2 positions are modified to N6-succinyllysine; alternate: lysine 80 and lysine 86. Lysine 99 carries the N6-acetyllysine modification.

It belongs to the GroES chaperonin family. In terms of assembly, homoheptamer arranged in a ring structure. 2 heptameric Hsp10 rings interact with a Hsp60 tetradecamer in the structure of a back-to-back double heptameric ring to form the symmetrical football complex.

It localises to the mitochondrion matrix. Functionally, co-chaperonin implicated in mitochondrial protein import and macromolecular assembly. Together with Hsp60, facilitates the correct folding of imported proteins. May also prevent misfolding and promote the refolding and proper assembly of unfolded polypeptides generated under stress conditions in the mitochondrial matrix. The functional units of these chaperonins consist of heptameric rings of the large subunit Hsp60, which function as a back-to-back double ring. In a cyclic reaction, Hsp60 ring complexes bind one unfolded substrate protein per ring, followed by the binding of ATP and association with 2 heptameric rings of the co-chaperonin Hsp10. This leads to sequestration of the substrate protein in the inner cavity of Hsp60 where, for a certain period of time, it can fold undisturbed by other cell components. Synchronous hydrolysis of ATP in all Hsp60 subunits results in the dissociation of the chaperonin rings and the release of ADP and the folded substrate protein. The sequence is that of 10 kDa heat shock protein, mitochondrial (HSPE1) from Bos taurus (Bovine).